Here is a 906-residue protein sequence, read N- to C-terminus: Protein translocase subunit SecA (906 aa).

ATP contacts are provided by residues glutamine 89, 107-111, and aspartate 502; that span reads GEGKT. The segment at 868 to 887 is disordered; that stretch reads VPPAQRDPADPRTWGKVSRN. Positions 890, 892, 901, and 902 each coordinate Zn(2+).

Belongs to the SecA family. Monomer and homodimer. Part of the essential Sec protein translocation apparatus which comprises SecA, SecYEG and auxiliary proteins SecDF-YajC and YidC. Zn(2+) is required as a cofactor.

The protein localises to the cell inner membrane. The protein resides in the cytoplasm. The enzyme catalyses ATP + H2O + cellular proteinSide 1 = ADP + phosphate + cellular proteinSide 2.. Part of the Sec protein translocase complex. Interacts with the SecYEG preprotein conducting channel. Has a central role in coupling the hydrolysis of ATP to the transfer of proteins into and across the cell membrane, serving both as a receptor for the preprotein-SecB complex and as an ATP-driven molecular motor driving the stepwise translocation of polypeptide chains across the membrane. The polypeptide is Protein translocase subunit SecA (Brucella melitensis biotype 1 (strain ATCC 23456 / CCUG 17765 / NCTC 10094 / 16M)).